A 432-amino-acid polypeptide reads, in one-letter code: Phosphoprotein associated with glycosphingolipid-enriched microdomains 1 (432 aa).

Residues 1–16 (MGPAGSLLGSGQMQIT) are Extracellular-facing. The helical; Signal-anchor for type III membrane protein transmembrane segment at 17–37 (LWGSLAAVAIFFVITFLIFLC) threads the bilayer. 2 S-palmitoyl cysteine lipidation sites follow: Cys37 and Cys40. At 38–432 (SSCDREKKPR…LQQGRDITRL (395 aa)) the chain is on the cytoplasmic side. Residues Ser50 and Ser61 each carry the phosphoserine modification. Tyr105 is modified (phosphotyrosine; by LYN). The span at 110–122 (TSASDLLDSQDST) shows a compositional bias: polar residues. A disordered region spans residues 110–137 (TSASDLLDSQDSTGKPKCHQSRELPRIP). Phosphotyrosine occurs at positions 163, 181, and 227. 2 disordered regions span residues 197–230 (EKGHSGKAKSTSASKELPGPQTEGKAEFAEYASV) and 244–432 (SILG…ITRL). Residues 220 to 230 (GKAEFAEYASV) show a composition bias toward basic and acidic residues. Ser229 is subject to Phosphoserine. Residues 316–356 (MYSSVNKPGQLVNKSGQSLTVPESTYTSIQGDPQRSPSSCN) are compositionally biased toward polar residues. At Tyr317 the chain carries Phosphotyrosine; by FYN and LYN. Residues 317 to 320 (YSSV) form an interaction with CSK region. A Phosphoserine modification is found at Ser354. Residue Tyr359 is modified to Phosphotyrosine. Ser380 is modified (phosphoserine). Residues Tyr387 and Tyr417 each carry the phosphotyrosine modification. The interaction with NHERF1 stretch occupies residues 430–432 (TRL).

In terms of assembly, interacts with FYN. When phosphorylated, interacts with CSK. Interacts with NHERF1/EBP50. In resting T-cells, part of a PAG1-NHERF1-MSN complex which is disrupted upon TCR activation. Interacts with LYN on plasma membrane lipid rafts. Identified in a complex with LYN and STAT3. Palmitoylated. In terms of processing, phosphorylated by FYN on Tyr-317 in resting T-cells; which promotes interaction with CSK. Dephosphorylated by PTPRC/CD45 upon TCR activation; which leads to CSK dissociation. May also be dephosphorylated by PTPN11. Hyperphosphorylated in mast cells upon FCER1 activation. Phosphorylated by LYN. As to expression, ubiquitously expressed. Present in germinal center B-cells, plasma cells, T-cells, monocytes and platelets (at protein level).

The protein resides in the cell membrane. Its function is as follows. Negatively regulates TCR (T-cell antigen receptor)-mediated signaling in T-cells and FCER1 (high affinity immunoglobulin epsilon receptor)-mediated signaling in mast cells. Promotes CSK activation and recruitment to lipid rafts, which results in LCK inhibition. Inhibits immunological synapse formation by preventing dynamic arrangement of lipid raft proteins. May be involved in cell adhesion signaling. The sequence is that of Phosphoprotein associated with glycosphingolipid-enriched microdomains 1 (PAG1) from Homo sapiens (Human).